The primary structure comprises 155 residues: Cytochrome c-550 (155 aa).

The N-terminal stretch at 1-20 (MKISIYATLAAITLALPAAA) is a signal peptide. Glutamine 21 bears the Pyrrolidone carboxylic acid mark. Heme c contacts are provided by cysteine 35, cysteine 38, histidine 39, and methionine 120. Positions 150 to 155 (AEGESN) are excised as a propeptide.

In terms of processing, binds 1 heme c group covalently per subunit.

The polypeptide is Cytochrome c-550 (cycA) (Paracoccus denitrificans).